Consider the following 494-residue polypeptide: Subtilisin-like serine protease EN45_078720 (494 aa).

A signal peptide spans 1-16; that stretch reads MKGFLSLTLLPLLVAA. Residues 17-136 constitute a propeptide, removed in mature form; it reads SPVAVNSIHN…IEKDSEVRTM (120 aa). In terms of domain architecture, Inhibitor I9 spans 43-136; the sequence is SYIVVFKKHV…IEKDSEVRTM (94 aa). Residues 146-448 form the Peptidase S8 domain; that stretch reads PWGLARISHR…GGSANYTKIL (303 aa). IgE-binding regions lie at residues 180 to 198 and 209 to 231; these read VIDT…RANW and EDGN…GVAK. Residues aspartate 182 and histidine 214 each act as charge relay system in the active site. Residues asparagine 244 and asparagine 280 are each glycosylated (N-linked (GlcNAc...) asparagine). Catalysis depends on serine 376, which acts as the Charge relay system. A glycan (N-linked (GlcNAc...) asparagine) is linked at asparagine 443. Positions 454–494 are cleaved as a propeptide — removed in mature form; sequence KAHNAETTVEDRIGGIIDSAEKAFHKELGAIYSEIKDAVSA.

This sequence belongs to the peptidase S8 family.

Serine protease. The chain is Subtilisin-like serine protease EN45_078720 from Penicillium chrysogenum (Penicillium notatum).